The following is a 186-amino-acid chain: Elongation factor P (186 aa).

This sequence belongs to the elongation factor P family.

Its subcellular location is the cytoplasm. Its pathway is protein biosynthesis; polypeptide chain elongation. Involved in peptide bond synthesis. Stimulates efficient translation and peptide-bond synthesis on native or reconstituted 70S ribosomes in vitro. Probably functions indirectly by altering the affinity of the ribosome for aminoacyl-tRNA, thus increasing their reactivity as acceptors for peptidyl transferase. In Prochlorococcus marinus (strain MIT 9312), this protein is Elongation factor P.